An 829-amino-acid chain; its full sequence is ATP-dependent RNA helicase drs1 (829 aa).

Disordered regions lie at residues Met1–Glu96 and Arg145–Phe295. Positions Asp20–Glu32 are enriched in acidic residues. Positions Lys48–Lys59 are enriched in basic residues. The segment covering Thr63–Ala78 has biased composition (acidic residues). Residues Ala150–Glu163 are compositionally biased toward basic and acidic residues. 4 stretches are compositionally biased toward acidic residues: residues Asp164–Leu190, Asp218–Asp228, Asp235–Ser246, and Gln258–Glu271. The segment covering Ala272–Glu291 has biased composition (basic and acidic residues). The short motif at Ser293–Ala321 is the Q motif element. In terms of domain architecture, Helicase ATP-binding spans Ile324–Ile498. ATP is bound at residue Ala337 to Thr344. The short motif at Asp446–Asp449 is the DEAD box element. Residues Tyr528 to Gln707 form the Helicase C-terminal domain. The tract at residues Thr728–Lys829 is disordered. The segment covering Gly749–Gly791 has biased composition (basic and acidic residues). The span at Lys800–Gly815 shows a compositional bias: basic residues.

This sequence belongs to the DEAD box helicase family. DDX27/DRS1 subfamily. As to quaternary structure, associates with pre-ribosomal particles.

It is found in the nucleus. The protein localises to the nucleolus. The enzyme catalyses ATP + H2O = ADP + phosphate + H(+). ATP-binding RNA helicase involved in ribosome assembly. This chain is ATP-dependent RNA helicase drs1 (drh-11), found in Neurospora crassa (strain ATCC 24698 / 74-OR23-1A / CBS 708.71 / DSM 1257 / FGSC 987).